Reading from the N-terminus, the 1412-residue chain is DNA-directed RNA polymerase subunit beta' (1412 aa).

Residues Cys-70, Cys-72, Cys-85, and Cys-88 each coordinate Zn(2+). 3 residues coordinate Mg(2+): Asp-460, Asp-462, and Asp-464. Residues Cys-819, Cys-893, Cys-900, and Cys-903 each coordinate Zn(2+). The segment at 1392 to 1412 is disordered; sequence EEAFEFGTPSTPAEEPQHPAE.

The protein belongs to the RNA polymerase beta' chain family. In terms of assembly, the RNAP catalytic core consists of 2 alpha, 1 beta, 1 beta' and 1 omega subunit. When a sigma factor is associated with the core the holoenzyme is formed, which can initiate transcription. Requires Mg(2+) as cofactor. It depends on Zn(2+) as a cofactor.

The enzyme catalyses RNA(n) + a ribonucleoside 5'-triphosphate = RNA(n+1) + diphosphate. In terms of biological role, DNA-dependent RNA polymerase catalyzes the transcription of DNA into RNA using the four ribonucleoside triphosphates as substrates. The chain is DNA-directed RNA polymerase subunit beta' from Burkholderia thailandensis (strain ATCC 700388 / DSM 13276 / CCUG 48851 / CIP 106301 / E264).